A 241-amino-acid chain; its full sequence is tRNA (guanine-N(7)-)-methyltransferase B (241 aa).

6 residues coordinate S-adenosyl-L-methionine: G61, E84, R86, N117, A118, and L137. The active site involves D140. Positions 141–149 (PHFKKTKHK) are alphaC helix. S-adenosyl-L-methionine contacts are provided by T215 and E217. The segment at 215–223 (TEEGKKVQR) is alpha6 helix.

This sequence belongs to the class I-like SAM-binding methyltransferase superfamily. TrmB family. In terms of assembly, catalytic component of the METTL1-WDR4 complex, composed of mettl1 and wdr4.

Its subcellular location is the nucleus. The enzyme catalyses guanosine(46) in tRNA + S-adenosyl-L-methionine = N(7)-methylguanosine(46) in tRNA + S-adenosyl-L-homocysteine. It catalyses the reaction a guanosine in mRNA + S-adenosyl-L-methionine = an N(7)-methylguanosine in mRNA + S-adenosyl-L-homocysteine. The catalysed reaction is a guanosine in miRNA + S-adenosyl-L-methionine = an N(7)-methylguanosine in miRNA + S-adenosyl-L-homocysteine. Its pathway is tRNA modification; N(7)-methylguanine-tRNA biosynthesis. Its function is as follows. Catalytic component of METTL1-WDR4 methyltransferase complex that mediates the formation of N(7)-methylguanine in a subset of RNA species, such as tRNAs, mRNAs and microRNAs (miRNAs). Catalyzes the formation of N(7)-methylguanine at position 46 (m7G46) in a large subset of tRNAs that contain the 5'-RAGGU-3' motif within the variable loop. M7G46 interacts with C13-G22 in the D-loop to stabilize tRNA tertiary structure and protect tRNAs from decay. Also acts as a methyltransferase for a subset of internal N(7)-methylguanine in mRNAs. Internal N(7)-methylguanine methylation of mRNAs in response to stress promotes their relocalization to stress granules, thereby suppressing their translation. Also methylates a specific subset of miRNAs. This chain is tRNA (guanine-N(7)-)-methyltransferase B (mettl1-B), found in Xenopus tropicalis (Western clawed frog).